The primary structure comprises 125 residues: Small ribosomal subunit protein uS13 (125 aa).

The interval 92-125 is disordered; sequence RRHLPVHGQRTKTNARTRKGPKKTVAGKKKAGKK.

This sequence belongs to the universal ribosomal protein uS13 family. Part of the 30S ribosomal subunit. Forms a loose heterodimer with protein S19. Forms two bridges to the 50S subunit in the 70S ribosome.

In terms of biological role, located at the top of the head of the 30S subunit, it contacts several helices of the 16S rRNA. In the 70S ribosome it contacts the 23S rRNA (bridge B1a) and protein L5 of the 50S subunit (bridge B1b), connecting the 2 subunits; these bridges are implicated in subunit movement. Contacts the tRNAs in the A and P-sites. This Saccharopolyspora erythraea (strain ATCC 11635 / DSM 40517 / JCM 4748 / NBRC 13426 / NCIMB 8594 / NRRL 2338) protein is Small ribosomal subunit protein uS13.